We begin with the raw amino-acid sequence, 54 residues long: Hemoglobin subunit omega (54 aa).

A Globin domain is found at 2 to 54 (HWTAEEKQIILAIWAKIDIEEAGAAALSRLLVVYPWTQRYFKNFGNLSSPTAI).

Belongs to the globin family.

In terms of biological role, hemoglobin omega chain is an embryonic-type beta-type chain found in prenatal and neonatal marsupials. This chain is Hemoglobin subunit omega, found in Notamacropus eugenii (Tammar wallaby).